We begin with the raw amino-acid sequence, 230 residues long: Lipoprotein-releasing system ATP-binding protein LolD (230 aa).

The 225-residue stretch at 6–230 (LQASNLEKEY…GHFILPSETL (225 aa)) folds into the ABC transporter domain. 42–49 (GSSGSGKS) is a binding site for ATP.

The protein belongs to the ABC transporter superfamily. Lipoprotein translocase (TC 3.A.1.125) family. The complex is composed of two ATP-binding proteins (LolD) and two transmembrane proteins (LolC and LolE).

The protein resides in the cell inner membrane. Part of the ABC transporter complex LolCDE involved in the translocation of mature outer membrane-directed lipoproteins, from the inner membrane to the periplasmic chaperone, LolA. Responsible for the formation of the LolA-lipoprotein complex in an ATP-dependent manner. This is Lipoprotein-releasing system ATP-binding protein LolD from Hydrogenovibrio crunogenus (strain DSM 25203 / XCL-2) (Thiomicrospira crunogena).